The chain runs to 122 residues: Large ribosomal subunit protein uL14 (122 aa).

Belongs to the universal ribosomal protein uL14 family. In terms of assembly, part of the 50S ribosomal subunit. Forms a cluster with proteins L3 and L19. In the 70S ribosome, L14 and L19 interact and together make contacts with the 16S rRNA in bridges B5 and B8.

Binds to 23S rRNA. Forms part of two intersubunit bridges in the 70S ribosome. The chain is Large ribosomal subunit protein uL14 from Methylibium petroleiphilum (strain ATCC BAA-1232 / LMG 22953 / PM1).